A 229-amino-acid polypeptide reads, in one-letter code: Potassium/proton antiporter CemA (229 aa).

A run of 3 helical transmembrane segments spans residues 7-27 (FTPL…SFSV), 107-127 (ILHF…SILG), and 189-209 (IISG…KYWI).

This sequence belongs to the CemA family.

Its subcellular location is the plastid. The protein localises to the chloroplast inner membrane. It catalyses the reaction K(+)(in) + H(+)(out) = K(+)(out) + H(+)(in). Functionally, contributes to K(+)/H(+) antiport activity by supporting proton efflux to control proton extrusion and homeostasis in chloroplasts in a light-dependent manner to modulate photosynthesis. Prevents excessive induction of non-photochemical quenching (NPQ) under continuous-light conditions. Indirectly promotes efficient inorganic carbon uptake into chloroplasts. The polypeptide is Potassium/proton antiporter CemA (Nicotiana tomentosiformis (Tobacco)).